The sequence spans 463 residues: Interferon-inducible GTPase 5 (463 aa).

The region spanning 52 to 234 (TRLEVGVTGE…PMLVTTWEHD (183 aa)) is the IRG-type G domain. GTP contacts are provided by residues 61-68 (ESGAGKSS), 86-90 (TGVVE), 168-170 (KVD), and 215-217 (SNL). 2 positions are modified to phosphoserine: Ser246 and Ser303. The interval 409–438 (QGEVSLEAAGDNAVEKRSSGEGTSEEAPLS) is disordered.

This sequence belongs to the TRAFAC class dynamin-like GTPase superfamily. IRG family.

It is found in the cell projection. It localises to the cilium. The protein localises to the flagellum. Its subcellular location is the lipid droplet. It catalyses the reaction GTP + H2O = GDP + phosphate + H(+). Functionally, required for sperm motility and therefore male fertility, via positive regulation of spermatozoa fibrous sheath formation. This chain is Interferon-inducible GTPase 5 (Irgc), found in Rattus norvegicus (Rat).